The chain runs to 118 residues: Turripeptide NCR-01 (118 aa).

The first 16 residues, 1 to 16 (MLRLILAVALVAACLA), serve as a signal peptide directing secretion. The interval 63–118 (QGFQGFLPQPHQKRDSYQHGGYQHQQSFDNFQGSGGMNNDNSDDSFALRNFNNDGY) is disordered. Residues 85–102 (QHQQSFDNFQGSGGMNND) show a composition bias toward polar residues.

In terms of tissue distribution, expressed by the venom duct.

It is found in the secreted. The sequence is that of Turripeptide NCR-01 from Gemmula speciosa (Splendid gem-turris).